A 217-amino-acid polypeptide reads, in one-letter code: 3,4-dihydroxy-2-butanone 4-phosphate synthase (217 aa).

D-ribulose 5-phosphate-binding positions include 37 to 38, Asp-42, 150 to 154, and Glu-174; these read RE and RQGHT. Residue Glu-38 coordinates Mg(2+). His-153 contributes to the Mg(2+) binding site.

The protein belongs to the DHBP synthase family. As to quaternary structure, homodimer. Mg(2+) serves as cofactor. It depends on Mn(2+) as a cofactor.

The catalysed reaction is D-ribulose 5-phosphate = (2S)-2-hydroxy-3-oxobutyl phosphate + formate + H(+). The protein operates within cofactor biosynthesis; riboflavin biosynthesis; 2-hydroxy-3-oxobutyl phosphate from D-ribulose 5-phosphate: step 1/1. Its function is as follows. Catalyzes the conversion of D-ribulose 5-phosphate to formate and 3,4-dihydroxy-2-butanone 4-phosphate. The sequence is that of 3,4-dihydroxy-2-butanone 4-phosphate synthase from Desulforamulus reducens (strain ATCC BAA-1160 / DSM 100696 / MI-1) (Desulfotomaculum reducens).